A 165-amino-acid chain; its full sequence is Ribosome maturation factor RimM (165 aa).

The PRC barrel domain occupies Glu94–Val165.

Belongs to the RimM family. Binds ribosomal protein uS19.

It is found in the cytoplasm. In terms of biological role, an accessory protein needed during the final step in the assembly of 30S ribosomal subunit, possibly for assembly of the head region. Essential for efficient processing of 16S rRNA. May be needed both before and after RbfA during the maturation of 16S rRNA. It has affinity for free ribosomal 30S subunits but not for 70S ribosomes. This Rickettsia typhi (strain ATCC VR-144 / Wilmington) protein is Ribosome maturation factor RimM.